Consider the following 362-residue polypeptide: Aminomethyltransferase (362 aa).

Belongs to the GcvT family. As to quaternary structure, the glycine cleavage system is composed of four proteins: P, T, L and H.

The catalysed reaction is N(6)-[(R)-S(8)-aminomethyldihydrolipoyl]-L-lysyl-[protein] + (6S)-5,6,7,8-tetrahydrofolate = N(6)-[(R)-dihydrolipoyl]-L-lysyl-[protein] + (6R)-5,10-methylene-5,6,7,8-tetrahydrofolate + NH4(+). In terms of biological role, the glycine cleavage system catalyzes the degradation of glycine. The chain is Aminomethyltransferase from Chlorobium limicola (strain DSM 245 / NBRC 103803 / 6330).